The following is a 249-amino-acid chain: Exosome complex component Rrp41 (249 aa).

The protein belongs to the RNase PH family. Rrp41 subfamily. As to quaternary structure, component of the archaeal exosome complex. Forms a hexameric ring-like arrangement composed of 3 Rrp41-Rrp42 heterodimers. The hexameric ring associates with a trimer of Rrp4 and/or Csl4 subunits.

Its subcellular location is the cytoplasm. Catalytic component of the exosome, which is a complex involved in RNA degradation. Has 3'-&gt;5' exoribonuclease activity. Can also synthesize heteromeric RNA-tails. This chain is Exosome complex component Rrp41, found in Pyrococcus horikoshii (strain ATCC 700860 / DSM 12428 / JCM 9974 / NBRC 100139 / OT-3).